Reading from the N-terminus, the 255-residue chain is Coiled-coil domain-containing 92B (255 aa).

Residues 28–90 (LRDLHLEILR…AAANAELRRE (63 aa)) adopt a coiled-coil conformation. Positions 149–255 (QRLQAPRPGP…SQPSAPGDPE (107 aa)) are disordered. Basic residues predominate over residues 166–177 (PRRRALRARRPP). Pro residues predominate over residues 242–255 (QPAPSQPSAPGDPE).

The polypeptide is Coiled-coil domain-containing 92B (Homo sapiens (Human)).